The following is a 111-amino-acid chain: Nucleoid-associated protein Ppha_1174 (111 aa).

Belongs to the YbaB/EbfC family. As to quaternary structure, homodimer.

It localises to the cytoplasm. The protein resides in the nucleoid. Functionally, binds to DNA and alters its conformation. May be involved in regulation of gene expression, nucleoid organization and DNA protection. The polypeptide is Nucleoid-associated protein Ppha_1174 (Pelodictyon phaeoclathratiforme (strain DSM 5477 / BU-1)).